A 204-amino-acid chain; its full sequence is FMN-dependent NADH:quinone oxidoreductase (204 aa).

FMN contacts are provided by residues S9 and 15 to 17 (SAS).

This sequence belongs to the azoreductase type 1 family. In terms of assembly, homodimer. It depends on FMN as a cofactor.

The enzyme catalyses 2 a quinone + NADH + H(+) = 2 a 1,4-benzosemiquinone + NAD(+). The catalysed reaction is N,N-dimethyl-1,4-phenylenediamine + anthranilate + 2 NAD(+) = 2-(4-dimethylaminophenyl)diazenylbenzoate + 2 NADH + 2 H(+). In terms of biological role, quinone reductase that provides resistance to thiol-specific stress caused by electrophilic quinones. Also exhibits azoreductase activity. Catalyzes the reductive cleavage of the azo bond in aromatic azo compounds to the corresponding amines. In Xanthomonas campestris pv. campestris (strain ATCC 33913 / DSM 3586 / NCPPB 528 / LMG 568 / P 25), this protein is FMN-dependent NADH:quinone oxidoreductase.